Reading from the N-terminus, the 377-residue chain is Phosphatidylserine decarboxylase proenzyme, mitochondrial (377 aa).

The N-terminal 34 residues, 1–34 (MMPLFNVLRSARMLPAVSKKVVSPPMMLRSVREL), are a transit peptide targeting the mitochondrion. Residues 35–61 (TNQSKNVYATKEVIIGASQKKKRSWVK) lie on the Mitochondrial matrix side of the membrane. The chain crosses the membrane as a helical span at residues 62–80 (WLSVSTLIIGGASYVGYLF). The Mitochondrial intermembrane segment spans residues 81–377 (TPDWREIVDS…YGQSLVADGV (297 aa)). Active-site charge relay system; for autoendoproteolytic cleavage activity residues include D181, H238, and S344. The active-site Schiff-base intermediate with substrate; via pyruvic acid; for decarboxylase activity is the S344. S344 carries the post-translational modification Pyruvic acid (Ser); by autocatalysis.

The protein belongs to the phosphatidylserine decarboxylase family. PSD-B subfamily. Eukaryotic type I sub-subfamily. As to quaternary structure, heterodimer of a large membrane-associated beta subunit and a small pyruvoyl-containing alpha subunit. It depends on pyruvate as a cofactor. Post-translationally, is synthesized initially as an inactive proenzyme. Formation of the active enzyme involves a self-maturation process in which the active site pyruvoyl group is generated from an internal serine residue via an autocatalytic post-translational modification. Two non-identical subunits are generated from the proenzyme in this reaction, and the pyruvate is formed at the N-terminus of the alpha chain, which is derived from the carboxyl end of the proenzyme. The autoendoproteolytic cleavage occurs by a canonical serine protease mechanism, in which the side chain hydroxyl group of the serine supplies its oxygen atom to form the C-terminus of the beta chain, while the remainder of the serine residue undergoes an oxidative deamination to produce ammonia and the pyruvoyl prosthetic group on the alpha chain. During this reaction, the Ser that is part of the protease active site of the proenzyme becomes the pyruvoyl prosthetic group, which constitutes an essential element of the active site of the mature decarboxylase.

It localises to the mitochondrion inner membrane. It carries out the reaction a 1,2-diacyl-sn-glycero-3-phospho-L-serine + H(+) = a 1,2-diacyl-sn-glycero-3-phosphoethanolamine + CO2. The protein operates within phospholipid metabolism; phosphatidylethanolamine biosynthesis; phosphatidylethanolamine from CDP-diacylglycerol: step 2/2. Its function is as follows. Catalyzes the formation of phosphatidylethanolamine (PtdEtn) from phosphatidylserine (PtdSer). Plays a central role in phospholipid metabolism and in the interorganelle trafficking of phosphatidylserine. In Caenorhabditis elegans, this protein is Phosphatidylserine decarboxylase proenzyme, mitochondrial.